The primary structure comprises 541 residues: MHTLIKGVLEEILEEEVIIEYPKDREHGHYATPIAFNLAKVFKKSPLVIAEELALKISTHEKTQGLFDSVVACKGYINFTLSLDFLERFTQKALELKERFGSQIKSERSQKIFLEFVSANPTGPLHIGHARGAVFGDSLAKIARFLGHEVLCEYYVNDMGSQIRLLGLSVWLAYREHVLKESVTYPEVFYKGEYIIEIAKKANNDLEPSLFKENEETIIEILSGYAKDLMLLEIKDNLDALGIHFDSYASEKEVFKHKDAVFERLEKANALYEKDSKIWLKSSLYQDESDRVLIKEDKSCTYLAGDIVYHDEKFKQNYTKYINIWGADHHGYIARVKASLEFLGHDSNKLEVLLAQMVRLLKDNEPYKMSKRAGNFILIKDVVDDVGKDALRFIFLSKRLDTHLEFDVNTLKKQDSSNPIYYIHYANSRIHTMLEKSPFSKEEVLQTPLTNLNAEEKYLLFSALSLPKAVESSFEEYGLQKMCEYAKTLASEFHRFYNAGKILDTPKAKELLKICLMVSLSLTNAFKLLGIEIKTKISAKD.

Positions 119-129 (ANPTGPLHIGH) match the 'HIGH' region motif.

The protein belongs to the class-I aminoacyl-tRNA synthetase family. Monomer.

The protein localises to the cytoplasm. It catalyses the reaction tRNA(Arg) + L-arginine + ATP = L-arginyl-tRNA(Arg) + AMP + diphosphate. The polypeptide is Arginine--tRNA ligase (Helicobacter pylori (strain P12)).